The chain runs to 589 residues: MAAHNLCFNSAFVCNVHHQKTQHFPCNAVSKTTSTHAVTFHRRSANYRPPLWDHQYLLSLENIYVKEVETAEKAILFKEEVRKTLNEIEGSIEQLEMIDSLQRLGISYHYKHEIHDILRKIHDQHGEIERETQDLHATSLEFILLRQHGFDVSQDAFDVFISETGEFRKTLHSDIKGLLSLYEASYFSMDSEFKLKETRIYANKRLSEFVAESSKTICREDETYILEMVKRALETPYHWSIRRLEARWYINVYEKKHEMNPLLLEFAAIDFNMLQANHQEELKLISSWWNSTGLMKQLDFVRDRITESYFWTIGIFYEPEFKYCRKILTKIFMLIVIMDDIYDIYGTLEELELFTNVVEKWDVNHVERLPNYMRMCFLFLYNEINQIGYDVLRDKGLNVIPYLKQVWTDLFKTFLTESKWYKTGHKPSFEEYMQNGVISSSVPTILLHLFSVLSDHISDQTLTDDSKNHSVVRSCATILRLANDLATSTEEMARGDSPKSVQCYMYETRASEEEARRHMQSMISDSWDIINSDLKTAHTSSLPRGFLAAAANLNRVVQCIYRHGDGHGSPEKTKTVDYIQSVLFNPVPL.

The N-terminal 25 residues, 1–25 (MAAHNLCFNSAFVCNVHHQKTQHFP), are a transit peptide targeting the chloroplast. (2E,6E)-farnesyl diphosphate is bound by residues Arg302, Asp339, Asp343, Arg480, and Asn483. Residues Asp339 and Asp343 each contribute to the Mg(2+) site. A DDXXD motif motif is present at residues 339–343 (DDIYD). Residues Asn483, Thr487, and Glu491 each contribute to the Mg(2+) site.

It belongs to the terpene synthase family. Tpsb subfamily. Requires Mg(2+) as cofactor. It depends on Mn(2+) as a cofactor. As to expression, expressed exclusively in flowers.

It is found in the plastid. Its subcellular location is the chloroplast. It carries out the reaction (2E,6E)-farnesyl diphosphate = (3E,6E)-alpha-farnesene + diphosphate. Its pathway is secondary metabolite biosynthesis; terpenoid biosynthesis. Functionally, predominantly involved in monoterpene (C10) biosynthesis. Using GPP as substrate, the major product is (E)-beta-ocimene with minor amounts of (Z)-beta-ocimene and myrcene. Using FPP as substrate, could also be able to synthesize in vitro sesquiterpenes (C15) with (E,E)-alpha-farnesene as the major product and with (Z,E)-alpha-farnesene and (E,E)-beta-farnesene as minor products. This chain is (E)-beta-ocimene synthase, chloroplastic (TPS02), found in Arabidopsis thaliana (Mouse-ear cress).